Reading from the N-terminus, the 163-residue chain is Small ribosomal subunit protein uS5 (163 aa).

Residues leucine 8–valine 71 enclose the S5 DRBM domain.

This sequence belongs to the universal ribosomal protein uS5 family. As to quaternary structure, part of the 30S ribosomal subunit. Contacts proteins S4 and S8.

Its function is as follows. With S4 and S12 plays an important role in translational accuracy. In terms of biological role, located at the back of the 30S subunit body where it stabilizes the conformation of the head with respect to the body. This is Small ribosomal subunit protein uS5 from Oleidesulfovibrio alaskensis (strain ATCC BAA-1058 / DSM 17464 / G20) (Desulfovibrio alaskensis).